The chain runs to 247 residues: MAVQVVQAVQAVHLESDAFLVCLNHALSTEKEEVMGLCIGELNDDTRSDSKFAYTGTEMRTVAEKVDAVRIVHIHSVIILRRSDKRKDRVEISPEQLSAASTEAERLAELTGRPMRVVGWYHSHPHITVWPSHVDVRTQAMYQMMDQGFVGLIFSCFIEDKNTKTGRVLYTCFQSIQAQKSSDLTHLDSVTKIHNGSVFTKNLCSQMSAVSGPLLQWLEDRLEQNQQHLQELQQEKEELMQELSSLE.

At A2 the chain carries N-acetylalanine. One can recognise an MPN domain in the interval 12 to 179 (VHLESDAFLV…YTCFQSIQAQ (168 aa)). Positions 122, 124, and 135 each coordinate Zn(2+). The JAMM motif motif lies at 122–135 (HSHPHITVWPSHVD). S189 carries the phosphoserine modification.

Belongs to the peptidase M67A family. BRCC36 subfamily. As to quaternary structure, component of the ARISC complex, at least composed of UIMC1/RAP80, ABRAXAS1, BRCC3/BRCC36, BABAM2 and BABAM1/NBA1. Component of the BRCA1-A complex, at least composed of BRCA1, BARD1, UIMC1/RAP80, ABRAXAS1, BRCC3/BRCC36, BABAM2 and BABAM1/NBA1. In the BRCA1-A complex, interacts directly with ABRAXAS1 and BABAM2. Component of the BRISC complex, at least composed of ABRAXAS2, BRCC3/BRCC36, BABAM2 and BABAM1/NBA1. Identified in a complex with SHMT2 and the other subunits of the BRISC complex. In the BRISC complex, interacts directly with ABRAXAS2. Identified in a complex with ABRAXAS2 and NUMA1. The BRISC complex interacts with the CSN complex. Component of the BRCA1/BRCA2 containing complex (BRCC), which also contains BRCA1, BRCA2, BARD1, BABAM2 and RAD51. BRCC is a ubiquitin E3 ligase complex that enhances cellular survival following DNA damage. Interacts with BRCA1. Binds polyubiquitin. Interacts with PWWP2B. Interacts with HDAC1; this interaction is enhanced in the presence of PWWP2B. Zn(2+) is required as a cofactor.

Its subcellular location is the nucleus. The protein localises to the cytoplasm. It is found in the cytoskeleton. The protein resides in the spindle pole. Its function is as follows. Metalloprotease that specifically cleaves 'Lys-63'-linked polyubiquitin chains. Does not have activity toward 'Lys-48'-linked polyubiquitin chains. Component of the BRCA1-A complex, a complex that specifically recognizes 'Lys-63'-linked ubiquitinated histones H2A and H2AX at DNA lesions sites, leading to target the BRCA1-BARD1 heterodimer to sites of DNA damage at double-strand breaks (DSBs). In the BRCA1-A complex, it specifically removes 'Lys-63'-linked ubiquitin on histones H2A and H2AX, antagonizing the RNF8-dependent ubiquitination at double-strand breaks (DSBs). Catalytic subunit of the BRISC complex, a multiprotein complex that specifically cleaves 'Lys-63'-linked ubiquitin in various substrates. Mediates the specific 'Lys-63'-specific deubiquitination associated with the COP9 signalosome complex (CSN), via the interaction of the BRISC complex with the CSN complex. The BRISC complex is required for normal mitotic spindle assembly and microtubule attachment to kinetochores via its role in deubiquitinating NUMA1. Plays a role in interferon signaling via its role in the deubiquitination of the interferon receptor IFNAR1; deubiquitination increases IFNAR1 activity by enhancing its stability and cell surface expression. Acts as a regulator of the NLRP3 inflammasome by mediating deubiquitination of NLRP3, leading to NLRP3 inflammasome assembly. Down-regulates the response to bacterial lipopolysaccharide (LPS) via its role in IFNAR1 deubiquitination. Deubiquitinates HDAC1 and PWWP2B leading to their stabilization. In Pongo abelii (Sumatran orangutan), this protein is Lys-63-specific deubiquitinase BRCC36 (BRCC3).